We begin with the raw amino-acid sequence, 364 residues long: Phosphoserine aminotransferase (364 aa).

L-glutamate is bound at residue R41. Residues 75–76 (AS), W100, T155, and Q198 each bind pyridoxal 5'-phosphate. An N6-(pyridoxal phosphate)lysine modification is found at K199. 239-240 (NT) is a binding site for pyridoxal 5'-phosphate.

This sequence belongs to the class-V pyridoxal-phosphate-dependent aminotransferase family. SerC subfamily. Homodimer. Requires pyridoxal 5'-phosphate as cofactor.

It is found in the cytoplasm. It carries out the reaction O-phospho-L-serine + 2-oxoglutarate = 3-phosphooxypyruvate + L-glutamate. The enzyme catalyses 4-(phosphooxy)-L-threonine + 2-oxoglutarate = (R)-3-hydroxy-2-oxo-4-phosphooxybutanoate + L-glutamate. The protein operates within amino-acid biosynthesis; L-serine biosynthesis; L-serine from 3-phospho-D-glycerate: step 2/3. Catalyzes the reversible conversion of 3-phosphohydroxypyruvate to phosphoserine and of 3-hydroxy-2-oxo-4-phosphonooxybutanoate to phosphohydroxythreonine. The protein is Phosphoserine aminotransferase of Streptococcus thermophilus (strain ATCC BAA-250 / LMG 18311).